Consider the following 172-residue polypeptide: Ribosome maturation factor RimM (172 aa).

The PRC barrel domain occupies 96 to 168; the sequence is DGEFYYHEII…RVDVEIPEGL (73 aa).

This sequence belongs to the RimM family. In terms of assembly, binds ribosomal protein uS19.

It is found in the cytoplasm. An accessory protein needed during the final step in the assembly of 30S ribosomal subunit, possibly for assembly of the head region. Essential for efficient processing of 16S rRNA. May be needed both before and after RbfA during the maturation of 16S rRNA. It has affinity for free ribosomal 30S subunits but not for 70S ribosomes. The polypeptide is Ribosome maturation factor RimM (Streptococcus sanguinis (strain SK36)).